A 4749-amino-acid chain; its full sequence is E3 ubiquitin-protein ligase MYCBP2 (4749 aa).

Disordered regions lie at residues aspartate 87 to serine 127, alanine 170 to proline 192, and alanine 609 to lysine 628. Positions serine 100–arginine 124 are enriched in basic residues. Phosphoserine is present on residues serine 127, serine 178, serine 181, and serine 183. RCC1 repeat units lie at residues aspartate 600–lysine 655, asparagine 699–proline 755, lysine 907–glutamate 957, asparagine 958–aspartate 1009, and glutamine 1011–aspartate 1066. Over residues serine 899–lysine 910 the composition is skewed to basic residues. The tract at residues serine 899 to threonine 928 is disordered. Basic and acidic residues predominate over residues histidine 911–serine 924. Residues asparagine 1235–leucine 1386 form a PHR domain 1 region. Residue serine 1621 is modified to Phosphoserine. Residues asparagine 1723–arginine 1881 form a PHR domain 2 region. Residues cysteine 1745 and cysteine 1860 are joined by a disulfide bond. The RAE1 binding stretch occupies residues alanine 2018–leucine 2544. 2 disordered regions span residues lysine 2313–alanine 2336 and glutamine 2780–glycine 3084. One copy of the Filamin repeat lies at serine 2331–lysine 2438. Over residues glutamine 2780 to lysine 2803 the composition is skewed to polar residues. Positions valine 2814 to glycine 2832 are enriched in basic and acidic residues. Position 2841 is a phosphoserine (serine 2841). A compositionally biased stretch (basic and acidic residues) spans aspartate 2847–serine 2857. Over residues arginine 2858–glycine 2879 the composition is skewed to polar residues. Phosphoserine is present on residues serine 2859 and serine 2861. Composition is skewed to low complexity over residues serine 2884 to proline 2894 and serine 2904 to proline 2917. Residues serine 2905 and serine 2911 each carry the phosphoserine modification. Polar residues predominate over residues glutamine 2918 to proline 2929. Over residues threonine 2932–serine 2943 the composition is skewed to basic and acidic residues. 3 positions are modified to phosphoserine: serine 2941, serine 2943, and serine 2992. Polar residues predominate over residues cysteine 3008–serine 3021. Composition is skewed to basic and acidic residues over residues glycine 3027–asparagine 3037 and proline 3047–alanine 3056. Position 3057 is a phosphoserine (serine 3057). Positions isoleucine 3060–lysine 3073 are enriched in basic residues. Phosphoserine is present on residues serine 3162, serine 3550, and serine 3577. Residues valine 3677–threonine 3700 are disordered. Residues asparagine 3687–threonine 3700 are compositionally biased toward basic and acidic residues. A DOC domain is found at phenylalanine 3789 to alanine 3967. The interval serine 3986–glutamate 4007 is disordered. Threonine 3992 carries the phosphothreonine modification. Residues serine 4002 and serine 4003 each carry the phosphoserine modification. Zn(2+) is bound by residues cysteine 4499, cysteine 4502, cysteine 4517, histidine 4519, histidine 4522, cysteine 4525, cysteine 4546, cysteine 4549, cysteine 4615, and cysteine 4618. The segment at cysteine 4499–lysine 4550 adopts an RING-type; atypical zinc-finger fold. Residues tyrosine 4610–histidine 4747 form a tandem cysteine domain region. Residue cysteine 4629 is part of the active site. Cysteine 4646, cysteine 4649, cysteine 4658, histidine 4661, cysteine 4670, cysteine 4673, and cysteine 4674 together coordinate Zn(2+). Residue cysteine 4681 is part of the active site. Zn(2+) contacts are provided by cysteine 4688, cysteine 4691, cysteine 4709, cysteine 4723, histidine 4729, cysteine 4740, and cysteine 4743.

It belongs to the RING-Cys relay (RCR) family. Interacts with MYC. Interacts with TSC2 (tuberin) when TSC2 is in complex with TSC1 (hamartin). Interacts with FBXO45. Interacts with RAE1. Interacts with CPNE1 (via VWFA domain) and CPNE4 (via VWFA domain). Interacts with (sumoylated) RANGAP1; interaction with sumoylated RANGAP1 inhibits E3 ubiquitin-protein ligase activity and promotes MYCBP2 translocation to the nucleus. Interacts with RAN. Interacts with ATP13A2; the interaction inhibits the ubiquitination of TSC2 by MYCBP2. Interacts with USP11. Post-translationally, autoubiquitinated. As to expression, expression is mostly restricted to the nervous system, including expression in motor and sensory axons. During postnatal development, expression is particularly strong in the cerebellum, hippocampus and retina. Lower levels of expression are observed throughout the cerebral cortex.

It localises to the nucleus. It is found in the cell projection. Its subcellular location is the axon. The protein localises to the cytoplasm. The protein resides in the cytoskeleton. The enzyme catalyses [E2 ubiquitin-conjugating enzyme]-S-ubiquitinyl-L-cysteine + [acceptor protein]-L-threonine = [E2 ubiquitin-conjugating enzyme]-L-cysteine + [acceptor protein]-3-O-ubiquitinyl-L-threonine.. The protein operates within protein modification; protein ubiquitination. Atypical E3 ubiquitin-protein ligase which specifically mediates ubiquitination of threonine and serine residues on target proteins, instead of ubiquitinating lysine residues. Shows esterification activity towards both threonine and serine, with a preference for threonine, and acts via two essential catalytic cysteine residues that relay ubiquitin to its substrate via thioester intermediates. Interacts with the E2 enzymes UBE2D1, UBE2D3, UBE2E1 and UBE2L3. Plays a key role in neural development, probably by mediating ubiquitination of threonine residues on target proteins. Involved in different processes such as regulation of neurite outgrowth, synaptic growth, synaptogenesis and axon degeneration. Required for the formation of major central nervous system axon tracts. Required for proper axon growth by regulating axon navigation and axon branching: acts by regulating the subcellular location and stability of MAP3K12/DLK. Required for proper localization of retinogeniculate projections but not for eye-specific segregation. Regulates axon guidance in the olfactory system. Involved in Wallerian axon degeneration, an evolutionarily conserved process that drives the loss of damaged axons: acts by promoting destabilization of NMNAT2, probably via ubiquitination of NMNAT2. Catalyzes ubiquitination of threonine and/or serine residues on NMNAT2, consequences of threonine and/or serine ubiquitination are however unknown. Regulates the internalization of TRPV1 in peripheral sensory neurons. May mediate ubiquitination and subsequent proteasomal degradation of TSC2/tuberin. Independently of the E3 ubiquitin-protein ligase activity, also acts as a guanosine exchange factor (GEF) for RAN in neurons of dorsal root ganglia. May function as a facilitator or regulator of transcriptional activation by MYC. Acts in concert with HUWE1 to regulate the circadian clock gene expression by promoting the lithium-induced ubiquination and degradation of NR1D1. This is E3 ubiquitin-protein ligase MYCBP2 from Mus musculus (Mouse).